Reading from the N-terminus, the 173-residue chain is Urease accessory protein UreE (173 aa).

Residues 136–173 form a disordered region; that stretch reads PEGGAYAGSGQDHHDHSHGEHTQGEHTHDEAAEPHHHG. Residues 146-173 are compositionally biased toward basic and acidic residues; it reads QDHHDHSHGEHTQGEHTHDEAAEPHHHG.

It belongs to the UreE family.

The protein resides in the cytoplasm. In terms of biological role, involved in urease metallocenter assembly. Binds nickel. Probably functions as a nickel donor during metallocenter assembly. This is Urease accessory protein UreE from Beijerinckia indica subsp. indica (strain ATCC 9039 / DSM 1715 / NCIMB 8712).